Reading from the N-terminus, the 386-residue chain is Lipoyl synthase, mitochondrial (386 aa).

The interval 1-48 (MHGRRHLAASLTRALTQAPSRSISSTPSLLQTLDPSVPSPSPPPAAEP) is disordered. A compositionally biased stretch (polar residues) spans 13–34 (RALTQAPSRSISSTPSLLQTLD). Over residues 37-46 (VPSPSPPPAA) the composition is skewed to pro residues. [4Fe-4S] cluster contacts are provided by cysteine 113, cysteine 118, cysteine 124, cysteine 144, cysteine 148, cysteine 151, and serine 360. The Radical SAM core domain maps to 129 to 349 (ETGTATATIM…RALGVEMGFR (221 aa)).

It belongs to the radical SAM superfamily. Lipoyl synthase family. It depends on [4Fe-4S] cluster as a cofactor.

The protein localises to the mitochondrion. It catalyses the reaction [[Fe-S] cluster scaffold protein carrying a second [4Fe-4S](2+) cluster] + N(6)-octanoyl-L-lysyl-[protein] + 2 oxidized [2Fe-2S]-[ferredoxin] + 2 S-adenosyl-L-methionine + 4 H(+) = [[Fe-S] cluster scaffold protein] + N(6)-[(R)-dihydrolipoyl]-L-lysyl-[protein] + 4 Fe(3+) + 2 hydrogen sulfide + 2 5'-deoxyadenosine + 2 L-methionine + 2 reduced [2Fe-2S]-[ferredoxin]. Its pathway is protein modification; protein lipoylation via endogenous pathway; protein N(6)-(lipoyl)lysine from octanoyl-[acyl-carrier-protein]: step 2/2. Its function is as follows. Catalyzes the radical-mediated insertion of two sulfur atoms into the C-6 and C-8 positions of the octanoyl moiety bound to the lipoyl domains of lipoate-dependent enzymes, thereby converting the octanoylated domains into lipoylated derivatives. This Sorghum bicolor (Sorghum) protein is Lipoyl synthase, mitochondrial.